A 911-amino-acid polypeptide reads, in one-letter code: Beta-galactosidase 12 (911 aa).

A signal peptide spans 1 to 25; sequence MAARVAAAVAAALLAAALLLPGAAA. The active-site Proton donor is E192. Residue E262 is the Nucleophile of the active site. 4 N-linked (GlcNAc...) asparagine glycosylation sites follow: N263, N389, N473, and N777. Positions 744-831 constitute an SUEL-type lectin domain; that stretch reads EDTSTRGTLN…ATLAVQLLLA (88 aa).

Belongs to the glycosyl hydrolase 35 family.

The protein resides in the secreted. It localises to the extracellular space. The protein localises to the apoplast. The catalysed reaction is Hydrolysis of terminal non-reducing beta-D-galactose residues in beta-D-galactosides.. This chain is Beta-galactosidase 12, found in Oryza sativa subsp. japonica (Rice).